We begin with the raw amino-acid sequence, 264 residues long: uncharacterized protein (264 aa).

Residues 7-27 form a helical membrane-spanning segment; sequence LTLGICLVLLIILIVGYVIMT.

This sequence belongs to the staphylococcal tandem lipoprotein family.

The protein resides in the cell membrane. This is an uncharacterized protein from Staphylococcus aureus (strain N315).